The primary structure comprises 376 residues: tRNA-specific 2-thiouridylase MnmA (376 aa).

ATP-binding positions include 9 to 16 and Met35; that span reads AMSGGIDS. Cys105 acts as the Nucleophile in catalysis. Cys105 and Cys202 form a disulfide bridge. Gly129 is an ATP binding site. Positions 151 to 153 are interaction with tRNA; the sequence is KDQ. Cys202 acts as the Cysteine persulfide intermediate in catalysis. An interaction with tRNA region spans residues 312-313; the sequence is RY.

It belongs to the MnmA/TRMU family.

It localises to the cytoplasm. It carries out the reaction S-sulfanyl-L-cysteinyl-[protein] + uridine(34) in tRNA + AH2 + ATP = 2-thiouridine(34) in tRNA + L-cysteinyl-[protein] + A + AMP + diphosphate + H(+). Catalyzes the 2-thiolation of uridine at the wobble position (U34) of tRNA, leading to the formation of s(2)U34. This is tRNA-specific 2-thiouridylase MnmA from Amoebophilus asiaticus (strain 5a2).